The following is a 235-amino-acid chain: Putative cobalt transport protein CbiM 2 (235 aa).

Helical transmembrane passes span 9–29 (PAGWCLVWWLIALPFLVMGII), 41–61 (YLPLLGVCGAFIFILSALKLP), 80–100 (FGYCVTAVVGAIVLLFQALLL), 107–127 (TMGANMVSMAIGGPIAGYAVY), 135–155 (INIYVTVFLASAVADIVTYII), 160–180 (LALAYPAQVGGFLASFSAFFS), and 181–201 (IFAITQIPLSIMEGVVLALVF).

This sequence belongs to the CbiM family. As to quaternary structure, forms an energy-coupling factor (ECF) transporter complex composed of an ATP-binding protein (A component, CbiO), a transmembrane protein (T component, CbiQ) and 2 possible substrate-capture proteins (S components, CbiM and CbiN) of unknown stoichimetry.

It is found in the cell membrane. The protein operates within cofactor biosynthesis; adenosylcobalamin biosynthesis. Part of the energy-coupling factor (ECF) transporter complex CbiMNOQ involved in cobalt import. This chain is Putative cobalt transport protein CbiM 2, found in Methanosphaerula palustris (strain ATCC BAA-1556 / DSM 19958 / E1-9c).